We begin with the raw amino-acid sequence, 490 residues long: Cis-aconitate decarboxylase (490 aa).

This sequence belongs to the PrpD family.

It is found in the mitochondrion. The catalysed reaction is cis-aconitate + H(+) = itaconate + CO2. In terms of biological role, involved in the production of itaconic acid, a soluble unsaturated dicarboxylic acid mainly produced from sugars. The chain is Cis-aconitate decarboxylase (cad1) from Aspergillus terreus.